The following is a 259-amino-acid chain: Dihydroorotate dehydrogenase B (NAD(+)), electron transfer subunit (259 aa).

In terms of domain architecture, FAD-binding FR-type spans 1–101 (MKIEDCTVEE…MGPLGRGYDV (101 aa)). Residues 52 to 55 (RPIS), 69 to 71 (IYR), and 76 to 77 (GT) contribute to the FAD site. [2Fe-2S] cluster contacts are provided by cysteine 223, cysteine 228, cysteine 231, and cysteine 245.

It belongs to the PyrK family. As to quaternary structure, heterotetramer of 2 PyrK and 2 PyrD type B subunits. It depends on [2Fe-2S] cluster as a cofactor. Requires FAD as cofactor.

It participates in pyrimidine metabolism; UMP biosynthesis via de novo pathway; orotate from (S)-dihydroorotate (NAD(+) route): step 1/1. Its function is as follows. Responsible for channeling the electrons from the oxidation of dihydroorotate from the FMN redox center in the PyrD type B subunit to the ultimate electron acceptor NAD(+). The protein is Dihydroorotate dehydrogenase B (NAD(+)), electron transfer subunit of Fusobacterium nucleatum subsp. nucleatum (strain ATCC 25586 / DSM 15643 / BCRC 10681 / CIP 101130 / JCM 8532 / KCTC 2640 / LMG 13131 / VPI 4355).